Reading from the N-terminus, the 196-residue chain is MNPREHGKRSIDNETRSALKRQRPAVIWLTGLSGAGKSTIASALELALFEQKKHTFLLDGDDLRLGLCRNLGYSDEDRTENIRRIAEVAKILLEAGLIVIVATISPFSRDRRLSRELIGIEHFIEVFVDTPLSECERRDPKGLYRKARSGKIENFTGIDSIYETPAQPNITIDTLSEDPDLAVKRIISYLETNQPA.

31 to 38 (GLSGAGKS) provides a ligand contact to ATP. S105 acts as the Phosphoserine intermediate in catalysis.

Belongs to the APS kinase family.

The enzyme catalyses adenosine 5'-phosphosulfate + ATP = 3'-phosphoadenylyl sulfate + ADP + H(+). Its pathway is sulfur metabolism; hydrogen sulfide biosynthesis; sulfite from sulfate: step 2/3. Functionally, catalyzes the synthesis of activated sulfate. The sequence is that of Adenylyl-sulfate kinase (cysC) from Pseudomonas aeruginosa (strain ATCC 15692 / DSM 22644 / CIP 104116 / JCM 14847 / LMG 12228 / 1C / PRS 101 / PAO1).